Reading from the N-terminus, the 554-residue chain is 3-(3-hydroxy-phenyl)propionate/3-hydroxycinnamic acid hydroxylase (554 aa).

FAD is bound by residues 17 to 46 (QVAIAGAGPVGLMMANYLGQMGIDVLVVEK) and 285 to 295 (FRIDRVLLAGD).

Belongs to the PheA/TfdB FAD monooxygenase family. FAD serves as cofactor.

It catalyses the reaction 3-(3-hydroxyphenyl)propanoate + NADH + O2 + H(+) = 3-(2,3-dihydroxyphenyl)propanoate + NAD(+) + H2O. The catalysed reaction is (2E)-3-(3-hydroxyphenyl)prop-2-enoate + NADH + O2 + H(+) = (2E)-3-(2,3-dihydroxyphenyl)prop-2-enoate + NAD(+) + H2O. It functions in the pathway aromatic compound metabolism; 3-phenylpropanoate degradation. Catalyzes the insertion of one atom of molecular oxygen into position 2 of the phenyl ring of 3-(3-hydroxyphenyl)propionate (3-HPP) and hydroxycinnamic acid (3HCI). This chain is 3-(3-hydroxy-phenyl)propionate/3-hydroxycinnamic acid hydroxylase, found in Escherichia coli O157:H7.